We begin with the raw amino-acid sequence, 132 residues long: Chemokine-like protein TAFA-5 (132 aa).

The signal sequence occupies residues 1-43 (MAPSPRTGSRQDATALPSMSSTFWAFMILASLLIAYCSQLAAG). An N-linked (GlcNAc...) asparagine glycan is attached at asparagine 113.

This sequence belongs to the TAFA family.

It localises to the secreted. Functionally, acts as a chemokine-like protein by regulating cell proliferation and migration through activation of G protein-coupled receptors (GPCRs), such as S1PR2 and FPR2. Stimulates chemotactic migration of macrophages mediated by the MAPK3/ERK1 and AKT1 pathway. Blocks TNFSF11/RANKL-induced osteoclast formation from macrophages by inhibiting up-regulation of osteoclast fusogenic and differentiation genes. Stimulation of macrophage migration and inhibition of osteoclast formation is mediated through the GPCR FPR2. Acts as an adipokine by negatively regulating vascular smooth muscle cell (VSMC) proliferation and migration in response to platelet-derived growth factor stimulation via GPCR S1PR2 and G protein GNA12/GNA13-transmitted RHOA signaling. Inhibits injury-induced cell proliferation and neointima formation in the femoral arteries. This Bos taurus (Bovine) protein is Chemokine-like protein TAFA-5 (TAFA5).